The chain runs to 88 residues: uncharacterized protein (88 aa).

This is an uncharacterized protein from Archaeoglobus fulgidus (strain ATCC 49558 / DSM 4304 / JCM 9628 / NBRC 100126 / VC-16).